A 270-amino-acid chain; its full sequence is Putative phosphoenolpyruvate synthase regulatory protein (270 aa).

154 to 161 (GVSRAGKT) contributes to the ADP binding site.

This sequence belongs to the pyruvate, phosphate/water dikinase regulatory protein family. PSRP subfamily.

The catalysed reaction is [pyruvate, water dikinase] + ADP = [pyruvate, water dikinase]-phosphate + AMP + H(+). It carries out the reaction [pyruvate, water dikinase]-phosphate + phosphate + H(+) = [pyruvate, water dikinase] + diphosphate. Functionally, bifunctional serine/threonine kinase and phosphorylase involved in the regulation of the phosphoenolpyruvate synthase (PEPS) by catalyzing its phosphorylation/dephosphorylation. The protein is Putative phosphoenolpyruvate synthase regulatory protein of Deinococcus geothermalis (strain DSM 11300 / CIP 105573 / AG-3a).